The primary structure comprises 326 residues: UDP-N-acetylglucosamine transporter (326 aa).

The next 8 helical transmembrane spans lie at 4–24 (NLKY…VLTM), 38–58 (LSST…ILLV), 136–156 (LGVY…FVQW), 174–194 (FVGL…GVYF), 212–232 (LGFF…GELV), 244–264 (LTWI…AVIK), 269–289 (ILKG…SYFW), and 293–313 (FVPT…TFLY).

Belongs to the nucleotide-sugar transporter family. SLC35A subfamily. In terms of assembly, interacts with SLC35A2; the interaction is reduced in the presence of SLC35A4. Found in a complex with SLC35A2 and SLC35A4. Interacts with MGAT4B. O-Glcnacylation regulates the stability of SLC35A3 and the specific complex formation with MGAT4B.

Its subcellular location is the golgi apparatus membrane. The enzyme catalyses UMP(out) + UDP-N-acetyl-alpha-D-glucosamine(in) = UMP(in) + UDP-N-acetyl-alpha-D-glucosamine(out). Functionally, transports diphosphate-N-acetylglucosamine (UDP-GlcNAc) from the cytosol into the lumen of the Golgi apparatus, functioning as an antiporter that exchanges UDP-N-acetyl-alpha-D-glucosamine for UMP. May supply UDP-GlcNAc as substrate for Golgi-resident glycosyltransferases that generate highly branched, multiantennary complex N-glycans and keratan sulfate. However, the exact role of SLC35A3 still needs to be elucidated, it could be a member of a catalytically more efficient multiprotein complex rather than function independently as a single transporter. The chain is UDP-N-acetylglucosamine transporter (SLC35A3) from Bos taurus (Bovine).